We begin with the raw amino-acid sequence, 417 residues long: Creatine kinase U-type, mitochondrial (417 aa).

The N-terminal 39 residues, 1-39 (MAGPFSRLLSARPGLRLLALAGAGSLAAGFLLRPEPVRA), are a transit peptide targeting the mitochondrion. A cardiolipin-binding region spans residues 40–64 (ASERRRLYPPSAEYPDLRKHNNCMA). Residues 45–131 (RLYPPSAEYP…FDPVIQERHN (87 aa)) form the Phosphagen kinase N-terminal domain. Ser-151 is modified (phosphoserine). The Phosphagen kinase C-terminal domain maps to 158–400 (YVLSSRVRTG…NYLIDCERRL (243 aa)). ATP is bound at residue 161–165 (SSRVR). A Phosphoserine modification is found at Ser-196. Thr-213 carries the post-translational modification Phosphothreonine. His-224 contacts ATP. A Phosphoserine modification is found at Ser-232. ATP contacts are provided by residues Arg-269, Arg-325, 353-358 (RGTGGV), and Asp-368. Position 355 is a phosphothreonine (Thr-355).

It belongs to the ATP:guanido phosphotransferase family. In terms of assembly, exists as an octamer composed of four MTCK homodimers.

The protein localises to the mitochondrion inner membrane. It carries out the reaction creatine + ATP = N-phosphocreatine + ADP + H(+). Reversibly catalyzes the transfer of phosphate between ATP and various phosphogens (e.g. creatine phosphate). Creatine kinase isoenzymes play a central role in energy transduction in tissues with large, fluctuating energy demands, such as skeletal muscle, heart, brain and spermatozoa. This chain is Creatine kinase U-type, mitochondrial (CKMT1A), found in Homo sapiens (Human).